The following is a 258-amino-acid chain: Thiazole synthase (258 aa).

The active-site Schiff-base intermediate with DXP is lysine 100. 1-deoxy-D-xylulose 5-phosphate is bound by residues glycine 161, 187-188, and 209-210; these read AG and NT.

It belongs to the ThiG family. As to quaternary structure, homotetramer. Forms heterodimers with either ThiH or ThiS.

It localises to the cytoplasm. The catalysed reaction is [ThiS sulfur-carrier protein]-C-terminal-Gly-aminoethanethioate + 2-iminoacetate + 1-deoxy-D-xylulose 5-phosphate = [ThiS sulfur-carrier protein]-C-terminal Gly-Gly + 2-[(2R,5Z)-2-carboxy-4-methylthiazol-5(2H)-ylidene]ethyl phosphate + 2 H2O + H(+). Its pathway is cofactor biosynthesis; thiamine diphosphate biosynthesis. Functionally, catalyzes the rearrangement of 1-deoxy-D-xylulose 5-phosphate (DXP) to produce the thiazole phosphate moiety of thiamine. Sulfur is provided by the thiocarboxylate moiety of the carrier protein ThiS. In vitro, sulfur can be provided by H(2)S. This chain is Thiazole synthase, found in Campylobacter jejuni subsp. doylei (strain ATCC BAA-1458 / RM4099 / 269.97).